We begin with the raw amino-acid sequence, 448 residues long: Trigger factor (448 aa).

Positions 172–257 (GDRVTVDFVG…MKKVEWPHLP (86 aa)) constitute a PPIase FKBP-type domain.

The protein belongs to the FKBP-type PPIase family. Tig subfamily.

The protein resides in the cytoplasm. The catalysed reaction is [protein]-peptidylproline (omega=180) = [protein]-peptidylproline (omega=0). Involved in protein export. Acts as a chaperone by maintaining the newly synthesized protein in an open conformation. Functions as a peptidyl-prolyl cis-trans isomerase. The sequence is that of Trigger factor from Burkholderia multivorans (strain ATCC 17616 / 249).